The following is a 104-amino-acid chain: Photosystem II reaction center Psb28 protein (104 aa).

The protein belongs to the Psb28 family. As to quaternary structure, part of the photosystem II complex.

The protein resides in the cellular thylakoid membrane. The polypeptide is Photosystem II reaction center Psb28 protein (Synechococcus sp. (strain JA-2-3B'a(2-13)) (Cyanobacteria bacterium Yellowstone B-Prime)).